The sequence spans 158 residues: Large ribosomal subunit protein bL19 (158 aa).

A compositionally biased stretch (basic and acidic residues) spans 119-129 (SDRSRVMKDAA). Residues 119–158 (SDRSRVMKDAARAQQARDAAQGNSSSETQSSTAAVETQGE) are disordered. A compositionally biased stretch (low complexity) spans 130–139 (RAQQARDAAQ). A compositionally biased stretch (polar residues) spans 140 to 158 (GNSSSETQSSTAAVETQGE).

The protein belongs to the bacterial ribosomal protein bL19 family.

This protein is located at the 30S-50S ribosomal subunit interface and may play a role in the structure and function of the aminoacyl-tRNA binding site. In Deinococcus geothermalis (strain DSM 11300 / CIP 105573 / AG-3a), this protein is Large ribosomal subunit protein bL19.